The primary structure comprises 302 residues: Probable protein S-acyltransferase 13 (302 aa).

Transmembrane regions (helical) follow at residues Ser17 to Val37 and Val56 to Val76. The DHHC domain maps to Arg116–Phe166. Catalysis depends on Cys146, which acts as the S-palmitoyl cysteine intermediate. 2 helical membrane passes run Phe166 to Phe186 and Ser204 to Met224.

Belongs to the DHHC palmitoyltransferase family.

Its subcellular location is the cell membrane. It is found in the cytoplasmic vesicle membrane. The catalysed reaction is L-cysteinyl-[protein] + hexadecanoyl-CoA = S-hexadecanoyl-L-cysteinyl-[protein] + CoA. In terms of biological role, palmitoyl acyltransferase. The polypeptide is Probable protein S-acyltransferase 13 (PAT13) (Arabidopsis thaliana (Mouse-ear cress)).